A 207-amino-acid chain; its full sequence is Intraflagellar transport protein 43 homolog A (207 aa).

Residues 1–104 (MDDNLQLGDS…GSDDEGDIPV (104 aa)) are disordered.

This sequence belongs to the IFT43 family. Component of IFT complex A.

Component of IFT complex A (IFT-A) involved in retrograde ciliary transport along microtubules from the ciliary tip to the base. The chain is Intraflagellar transport protein 43 homolog A (ift43a) from Salmo salar (Atlantic salmon).